Reading from the N-terminus, the 178-residue chain is Cytidylate kinase 2 (178 aa).

Residue 7 to 15 (GKSGCGNTT) coordinates ATP.

This sequence belongs to the cytidylate kinase family. Type 2 subfamily.

The protein resides in the cytoplasm. It catalyses the reaction CMP + ATP = CDP + ADP. It carries out the reaction dCMP + ATP = dCDP + ADP. The polypeptide is Cytidylate kinase 2 (Borrelia garinii subsp. bavariensis (strain ATCC BAA-2496 / DSM 23469 / PBi) (Borreliella bavariensis)).